We begin with the raw amino-acid sequence, 512 residues long: MTNVPWLTAIVLFPVSAGLLIPLLPGRGNHIVRWYALGICLLDLILMTYVFGCYYNLSDLPVQLKEDYCWIEILDFHWRLGVDGLSIGLILLTGFVTTLATLAAWPVTRNPKLFYFLMLAMYSGQLGLFASQDILLFFVMWELELIPVYLLLSMWGGRRRLYAATKFILYTAGGSIFLLAGLLTASLWGSNAPVLDFEILSHKSYPLGLEILIYLGFLIAYAVKLPAFPLHTWLPDTHGEAHYSTCMLLAGILLKMGGYGFIRVNMELLPHAHTVFAPWLVALGAYQIVYAALVSFAQRNLKRRIAYSSVSHMGFVLVGAGSLSDLGLSGAMLQMISHGLIGASLFFLAGTSYDRTRTLMLREMGAWASQMPKMFAMFTTCAMASLALPGMSGFVSELMVFFGMVTSAAYSPYFRAIITLIEAVGIILTPIYLLSMVRQMFYGSRISSVSVFNNIDAGPREVFVLGSLLLPMIGIGIYPNFALPLWSAKTQAVASLVQPTSILYSQTLYNIQ.

14 helical membrane passes run 4–24 (VPWL…IPLL), 34–54 (WYAL…FGCY), 87–107 (IGLI…AWPV), 111–131 (PKLF…LFAS), 134–154 (ILLF…LLSM), 167–187 (FILY…TASL), 208–228 (GLEI…LPAF), 242–262 (HYST…YGFI), 274–294 (TVFA…AALV), 308–328 (SSVS…DLGL), 330–350 (GAML…FLAG), 374–396 (MFAM…GFVS), 417–437 (IITL…LSMV), and 462–482 (VFVL…PNFA).

Belongs to the complex I subunit 4 family.

The protein resides in the plastid. The protein localises to the chloroplast thylakoid membrane. It carries out the reaction a plastoquinone + NADH + (n+1) H(+)(in) = a plastoquinol + NAD(+) + n H(+)(out). It catalyses the reaction a plastoquinone + NADPH + (n+1) H(+)(in) = a plastoquinol + NADP(+) + n H(+)(out). This Zygnema circumcarinatum (Green alga) protein is NAD(P)H-quinone oxidoreductase chain 4, chloroplastic.